The chain runs to 418 residues: Glutamyl-tRNA reductase (418 aa).

Substrate contacts are provided by residues Thr-49–Arg-52, Ser-109, Glu-114–Gln-116, and Gln-120. Cys-50 (nucleophile) is an active-site residue. Gly-189–Ile-194 serves as a coordination point for NADP(+).

The protein belongs to the glutamyl-tRNA reductase family. In terms of assembly, homodimer.

The catalysed reaction is (S)-4-amino-5-oxopentanoate + tRNA(Glu) + NADP(+) = L-glutamyl-tRNA(Glu) + NADPH + H(+). Its pathway is porphyrin-containing compound metabolism; protoporphyrin-IX biosynthesis; 5-aminolevulinate from L-glutamyl-tRNA(Glu): step 1/2. Functionally, catalyzes the NADPH-dependent reduction of glutamyl-tRNA(Glu) to glutamate 1-semialdehyde (GSA). The sequence is that of Glutamyl-tRNA reductase from Escherichia coli O127:H6 (strain E2348/69 / EPEC).